Consider the following 540-residue polypeptide: Chaperonin GroEL 3 (540 aa).

Residues 30-33 (TLGP), Lys51, 87-91 (DGTTT), Gly415, 479-481 (NAA), and Asp495 each bind ATP.

Belongs to the chaperonin (HSP60) family. Forms a cylinder of 14 subunits composed of two heptameric rings stacked back-to-back. Interacts with the co-chaperonin GroES.

The protein localises to the cytoplasm. It carries out the reaction ATP + H2O + a folded polypeptide = ADP + phosphate + an unfolded polypeptide.. Its function is as follows. Together with its co-chaperonin GroES, plays an essential role in assisting protein folding. The GroEL-GroES system forms a nano-cage that allows encapsulation of the non-native substrate proteins and provides a physical environment optimized to promote and accelerate protein folding. The sequence is that of Chaperonin GroEL 3 from Burkholderia ambifaria (strain ATCC BAA-244 / DSM 16087 / CCUG 44356 / LMG 19182 / AMMD) (Burkholderia cepacia (strain AMMD)).